A 30-amino-acid chain; its full sequence is Trypsin inhibitor 4 (30 aa).

3 disulfide bridges follow: C3/C20, C10/C22, and C16/C29.

This sequence belongs to the protease inhibitor I7 (squash-type serine protease inhibitor) family.

Its subcellular location is the secreted. Functionally, inhibits trypsin. In Cucumis sativus (Cucumber), this protein is Trypsin inhibitor 4.